Reading from the N-terminus, the 212-residue chain is Golgi SNAP receptor complex member 2 homolog memb-1 (212 aa).

Residues 1–189 (MEAQYQSTNF…QVIDRRVRED (189 aa)) lie on the Cytoplasmic side of the membrane. Residues 190–210 (WIFVIGCIVCCIFMYAFYRFW) form a helical; Anchor for type IV membrane protein membrane-spanning segment. At 211 to 212 (RG) the chain is on the vesicular side.

This sequence belongs to the GOSR2 family. In terms of assembly, part of a unique SNARE complex.

The protein resides in the golgi apparatus. Its subcellular location is the cis-Golgi network membrane. It is found in the golgi apparatus membrane. The protein localises to the endoplasmic reticulum membrane. Involved in transport of proteins from the cis/medial-Golgi to the trans-Golgi network. This Caenorhabditis briggsae protein is Golgi SNAP receptor complex member 2 homolog memb-1.